Here is a 419-residue protein sequence, read N- to C-terminus: Gamma-glutamyl phosphate reductase (419 aa).

This sequence belongs to the gamma-glutamyl phosphate reductase family.

The protein localises to the cytoplasm. It carries out the reaction L-glutamate 5-semialdehyde + phosphate + NADP(+) = L-glutamyl 5-phosphate + NADPH + H(+). It participates in amino-acid biosynthesis; L-proline biosynthesis; L-glutamate 5-semialdehyde from L-glutamate: step 2/2. Functionally, catalyzes the NADPH-dependent reduction of L-glutamate 5-phosphate into L-glutamate 5-semialdehyde and phosphate. The product spontaneously undergoes cyclization to form 1-pyrroline-5-carboxylate. The sequence is that of Gamma-glutamyl phosphate reductase from Syntrophomonas wolfei subsp. wolfei (strain DSM 2245B / Goettingen).